We begin with the raw amino-acid sequence, 224 residues long: UPF0758 protein VF_0126 (224 aa).

One can recognise an MPN domain in the interval 102–224 (ALTSPEHTKR…IVSFAERGWI (123 aa)). Zn(2+)-binding residues include H173, H175, and D186. The JAMM motif signature appears at 173-186 (HNHPSGVAEPSQAD).

It belongs to the UPF0758 family.

This chain is UPF0758 protein VF_0126, found in Aliivibrio fischeri (strain ATCC 700601 / ES114) (Vibrio fischeri).